Reading from the N-terminus, the 299-residue chain is Protease HtpX homolog (299 aa).

The next 2 helical transmembrane spans lie at 16–36 and 38–58; these read VMAA…YVFF and SAIA…VLMI. Histidine 144 lines the Zn(2+) pocket. Residue glutamate 145 is part of the active site. Zn(2+) is bound at residue histidine 148. 2 helical membrane-spanning segments follow: residues 159–179 and 198–218; these read IALA…NAFW and VLLM…ASLV. Position 227 (glutamate 227) interacts with Zn(2+).

This sequence belongs to the peptidase M48B family. It depends on Zn(2+) as a cofactor.

The protein resides in the cell membrane. The sequence is that of Protease HtpX homolog from Lactiplantibacillus plantarum (strain ATCC BAA-793 / NCIMB 8826 / WCFS1) (Lactobacillus plantarum).